A 235-amino-acid chain; its full sequence is 2-C-methyl-D-erythritol 4-phosphate cytidylyltransferase (235 aa).

The protein belongs to the IspD/TarI cytidylyltransferase family. IspD subfamily.

It carries out the reaction 2-C-methyl-D-erythritol 4-phosphate + CTP + H(+) = 4-CDP-2-C-methyl-D-erythritol + diphosphate. It participates in isoprenoid biosynthesis; isopentenyl diphosphate biosynthesis via DXP pathway; isopentenyl diphosphate from 1-deoxy-D-xylulose 5-phosphate: step 2/6. Catalyzes the formation of 4-diphosphocytidyl-2-C-methyl-D-erythritol from CTP and 2-C-methyl-D-erythritol 4-phosphate (MEP). The sequence is that of 2-C-methyl-D-erythritol 4-phosphate cytidylyltransferase from Pseudomonas putida (strain ATCC 700007 / DSM 6899 / JCM 31910 / BCRC 17059 / LMG 24140 / F1).